A 528-amino-acid polypeptide reads, in one-letter code: Tyrosine--tRNA ligase, cytoplasmic (528 aa).

Met-1 carries the post-translational modification N-acetylmethionine. Gly-2 carries the post-translational modification N-acetylglycine; in Tyrosine--tRNA ligase, cytoplasmic, N-terminally processed. Tyr-39 lines the L-tyrosine pocket. Tyr-39 provides a ligand contact to trans-resveratrol. The 'HIGH' region motif lies at Thr-44–Tyr-52. L-tyrosine-binding residues include Tyr-166, Gln-170, Asp-173, and Gln-188. Trans-resveratrol-binding residues include Gln-170 and Asp-173. Lys-197 bears the N6-acetyllysine mark. Ser-205 is modified (phosphoserine). Lys-206 is subject to N6-acetyllysine. A 'KMSKS' region motif is present at residues Lys-222–Ser-226. A Nuclear localization signal motif is present at residues Lys-242–Lys-247. A disordered region spans residues Ala-339–Val-363. Residues Ile-364–Phe-468 form the tRNA-binding domain. Ser-386 is subject to Phosphoserine. Lys-474, Lys-482, and Lys-490 each carry N6-acetyllysine.

Belongs to the class-I aminoacyl-tRNA synthetase family. Homodimer. Interacts (when binding to resveratrol) with PARP1; interaction stimulates the poly-ADP-ribosyltransferase activity of PARP1.

Its subcellular location is the cytoplasm. The protein resides in the nucleus. It carries out the reaction tRNA(Tyr) + L-tyrosine + ATP = L-tyrosyl-tRNA(Tyr) + AMP + diphosphate + H(+). With respect to regulation, resveratrol strongly inhibits the tyrosine--tRNA ligase activity. In terms of biological role, tyrosine--tRNA ligase that catalyzes the attachment of tyrosine to tRNA(Tyr) in a two-step reaction: tyrosine is first activated by ATP to form Tyr-AMP and then transferred to the acceptor end of tRNA(Tyr). Also acts as a positive regulator of poly-ADP-ribosylation in the nucleus, independently of its tyrosine--tRNA ligase activity. Activity is switched upon resveratrol-binding: resveratrol strongly inhibits the tyrosine--tRNA ligase activity and promotes relocalization to the nucleus, where YARS1 specifically stimulates the poly-ADP-ribosyltransferase activity of PARP1. In Mus musculus (Mouse), this protein is Tyrosine--tRNA ligase, cytoplasmic (Yars1).